Here is a 43-residue protein sequence, read N- to C-terminus: Protein PsbN (43 aa).

Residues threonine 5–phenylalanine 27 form a helical membrane-spanning segment.

It belongs to the PsbN family.

Its subcellular location is the plastid. It is found in the chloroplast thylakoid membrane. Functionally, may play a role in photosystem I and II biogenesis. The chain is Protein PsbN from Cicer arietinum (Chickpea).